The primary structure comprises 121 residues: Flagellar protein FliT (121 aa).

The required for homodimerization stretch occupies residues 1-50 (MNNAPHLYFAWQQLVEKSQLMLRLATEEQWDELIASEMAYVNAVQEIAHL). The fliD binding stretch occupies residues 60–98 (MQEQLRPMLHLILDNESKVKQLLQIRMDELAKLVGQSSV).

The protein belongs to the FliT family. Homodimer. Interacts with FliD and FlhC.

The protein localises to the cytoplasm. It localises to the cytosol. Dual-function protein that regulates the transcription of class 2 flagellar operons and that also acts as an export chaperone for the filament-capping protein FliD. As a transcriptional regulator, acts as an anti-FlhDC factor; it directly binds FlhC, thus inhibiting the binding of the FlhC/FlhD complex to class 2 promoters, resulting in decreased expression of class 2 flagellar operons. As a chaperone, effects FliD transition to the membrane by preventing its premature polymerization, and by directing it to the export apparatus. This Escherichia coli O17:K52:H18 (strain UMN026 / ExPEC) protein is Flagellar protein FliT.